We begin with the raw amino-acid sequence, 577 residues long: AP-1-like transcription factor napA (577 aa).

Residues 25-178 (ALSSNNPPSK…RAFRERKEKH (154 aa)) form a disordered region. Over residues 26 to 64 (LSSNNPPSKQKQNVQKPELGTNPTNTPGQASTGSFNTSP) the composition is skewed to polar residues. Basic and acidic residues-rich tracts occupy residues 109–121 (SDDH…RKDS) and 133–144 (RESDDKSDDKTS). 2 short sequence motifs (bipartite nuclear localization signal) span residues 117–124 (KRKDSNSN) and 144–151 (SKKPGRKP). Residues 154–217 (SEPTSKRKAQ…ERLQVELREY (64 aa)) enclose the bZIP domain. Residues 159–180 (KRKAQNRAAQRAFRERKEKHLK) form a basic motif region. A leucine-zipper region spans residues 182 to 189 (LEAKVEEL). A disordered region spans residues 294–386 (QAANGRASSS…NQAKESHEGH (93 aa)). The span at 299 to 319 (RASSSASPKTVTSNNPATKSP) shows a compositional bias: polar residues. Residues 347–364 (TSDSPSSSSDSHQFLSSS) show a composition bias toward low complexity. Polar residues predominate over residues 365–377 (GTSPEPSVQSPDN). Positions 525–558 (CTKIWDRLQSMEKFRNGEIDVDNLCSELRTKARC) are c-CRD. A Nuclear export signal motif is present at residues 543-550 (IDVDNLCS).

The protein belongs to the bZIP family. YAP subfamily. In terms of processing, oxidative stress induces conformational changes through oxidation of cysteine residues, masking the nuclear export signal, thus abolishing nuclear export by CRM1/exportin 1.

It is found in the nucleus. It localises to the cytoplasm. In terms of biological role, transcription activator involved in oxidative stress response, specifically during hyphal growth. Regulates the transcription of genes encoding antioxidant enzymes and components of the cellular thiol-reducing pathways including the mycelium-specific catalase catB (but not the conidia-specific catalase catA), thioredoxin reductase trxB and thioredoxin thiO. Preferentially binds to promoters with the core binding site 5'-TTA[CG]TAA-3'. Activity of the transcription factor is controlled through oxidation of specific cysteine residues resulting in the alteration of its subcellular location. Activation by hydroperoxides induces nuclear accumulation and as a result NapA transcriptional activity. The chain is AP-1-like transcription factor napA from Emericella nidulans (strain FGSC A4 / ATCC 38163 / CBS 112.46 / NRRL 194 / M139) (Aspergillus nidulans).